A 444-amino-acid polypeptide reads, in one-letter code: Probable glycine dehydrogenase (decarboxylating) subunit 1 (444 aa).

The protein belongs to the GcvP family. N-terminal subunit subfamily. As to quaternary structure, the glycine cleavage system is composed of four proteins: P, T, L and H. In this organism, the P 'protein' is a heterodimer of two subunits.

The catalysed reaction is N(6)-[(R)-lipoyl]-L-lysyl-[glycine-cleavage complex H protein] + glycine + H(+) = N(6)-[(R)-S(8)-aminomethyldihydrolipoyl]-L-lysyl-[glycine-cleavage complex H protein] + CO2. Functionally, the glycine cleavage system catalyzes the degradation of glycine. The P protein binds the alpha-amino group of glycine through its pyridoxal phosphate cofactor; CO(2) is released and the remaining methylamine moiety is then transferred to the lipoamide cofactor of the H protein. This Prosthecochloris aestuarii (strain DSM 271 / SK 413) protein is Probable glycine dehydrogenase (decarboxylating) subunit 1.